Reading from the N-terminus, the 589-residue chain is Isocitrate dehydrogenase kinase/phosphatase (589 aa).

ATP contacts are provided by residues 317 to 323 (AAGIKGM) and K338. The active site involves D373.

Belongs to the AceK family.

The protein localises to the cytoplasm. It carries out the reaction L-seryl-[isocitrate dehydrogenase] + ATP = O-phospho-L-seryl-[isocitrate dehydrogenase] + ADP + H(+). Bifunctional enzyme which can phosphorylate or dephosphorylate isocitrate dehydrogenase (IDH) on a specific serine residue. This is a regulatory mechanism which enables bacteria to bypass the Krebs cycle via the glyoxylate shunt in response to the source of carbon. When bacteria are grown on glucose, IDH is fully active and unphosphorylated, but when grown on acetate or ethanol, the activity of IDH declines drastically concomitant with its phosphorylation. This is Isocitrate dehydrogenase kinase/phosphatase from Colwellia psychrerythraea (strain 34H / ATCC BAA-681) (Vibrio psychroerythus).